Here is a 165-residue protein sequence, read N- to C-terminus: uncharacterized protein (165 aa).

A helical membrane pass occupies residues Ala-16 to Val-36.

Belongs to the asfivirus F165R family.

The protein localises to the host membrane. This is an uncharacterized protein from African swine fever virus (isolate Tick/Malawi/Lil 20-1/1983) (ASFV).